The following is a 374-amino-acid chain: Erythronate-4-phosphate dehydrogenase (374 aa).

The substrate site is built by serine 45 and threonine 67. Residue aspartate 147 coordinates NAD(+). Arginine 208 is a catalytic residue. Residue aspartate 232 coordinates NAD(+). Residue glutamate 237 is part of the active site. The Proton donor role is filled by histidine 254. Glycine 257 contributes to the NAD(+) binding site.

Belongs to the D-isomer specific 2-hydroxyacid dehydrogenase family. PdxB subfamily. In terms of assembly, homodimer.

It localises to the cytoplasm. The catalysed reaction is 4-phospho-D-erythronate + NAD(+) = (R)-3-hydroxy-2-oxo-4-phosphooxybutanoate + NADH + H(+). Its pathway is cofactor biosynthesis; pyridoxine 5'-phosphate biosynthesis; pyridoxine 5'-phosphate from D-erythrose 4-phosphate: step 2/5. In terms of biological role, catalyzes the oxidation of erythronate-4-phosphate to 3-hydroxy-2-oxo-4-phosphonooxybutanoate. The polypeptide is Erythronate-4-phosphate dehydrogenase (Pseudoalteromonas atlantica (strain T6c / ATCC BAA-1087)).